Here is a 942-residue protein sequence, read N- to C-terminus: MEQKPSPPPPPRSDEEEDGLMGCGMGGTGDIAGGDLDLMEEFLLATPGFDLSEFWHPGAASPFSPLFDIGSSVTTLTTPAPAAGEDDRDEAEMPSRGGGGLEVSPAHRGWTFQTAPQEVAVEPTVKERLRRALERIASQSQSQAQRGDGELLVQVWVPTRIGDRQVLTTCGQPFWLDRRNQRLANYRTVSMKYQFSADESARADLGLPGRVFVGRVPEWTPDVRYFSTEEYPRVQHAQYFDIRGSVALPVFEPRSRACLGVVELVMTTQKVNYSAEIENICNALKEVDLRSSDVSSDPRSKVVDASYRAIIPEIMDVLRAVCDTHNLPLAQTWIPCICQAKRGSRHSDESYKHCVSTVDEACYVRDCSVLGFHQACSEHHLFRGEGVVGRAFGTNEPCFSPDITTYSKTQYPLSHHAKLFGLRAAVAIQLRSVKTGSLDFVLEFFLPMKCINTEEQRAMLNSLSNTIQQVCYTLRVVKPKELVNDGPFEISQPTRPEFYAKSVHEDLDELCSGINVPGRTTSLEASEEVSSWIASLVDAQNKGGKGEIDVDLPFGFSKQDDEGFSVTAGWHTSPVMAPDGSMFSGFKRHEDYDVKENTCSSDPSNSNSDKAVEKRRTKTEKTVSLQDLRKHFAGSLKEAAKNLGVCPTTLKRICRQHGINRWPSRKIKKVGHSLKKLQMVIDSVHGPEGTVQLSSLYENFTKTTWSERELQGDVHFPASEQNFQLEPSVPDRPCEGRFTSHTSGSNSISPSCSQSSNSSLGCSSVPKTQQQHGSAPQLAVKEEISMDENQCSTLIKSASHAEAELQMFVEERPTMLFRSQSQVLLSEHKPIENMSNVQKARSDSLKIKAIYGEERCIFRLQPSWGFQRLKEEIVKRFGISQDTHVDLKYLDDESEWVLLTCDADLLECIDVYKSSSNQTVRILVNPSIQPLLNASFGQTGLS.

Residues 1-11 (MEQKPSPPPPP) show a composition bias toward pro residues. Disordered stretches follow at residues 1-32 (MEQK…GDIA), 77-106 (TTPA…VSPA), 594-620 (VKEN…TKTE), 723-753 (FQLE…PSCS), and 759-778 (SLGC…APQL). A compositionally biased stretch (gly residues) spans 21–32 (MGCGMGGTGDIA). The segment covering 597–609 (NTCSSDPSNSNSD) has biased composition (polar residues). Residues 609 to 690 (DKAVEKRRTK…IDSVHGPEGT (82 aa)) enclose the RWP-RK domain. Low complexity predominate over residues 743–753 (SGSNSISPSCS). Over residues 765–774 (VPKTQQQHGS) the composition is skewed to polar residues. The region spanning 844–927 (SLKIKAIYGE…QTVRILVNPS (84 aa)) is the PB1 domain.

The protein localises to the nucleus. Probable transcription factor. This chain is Protein NLP1 (NLP1), found in Oryza sativa subsp. japonica (Rice).